A 207-amino-acid chain; its full sequence is 23 kDa calcium-binding protein (207 aa).

Met-1 bears the Blocked amino end (Met) mark. 4 consecutive EF-hand domains span residues 17 to 52 (AKLD…TFEN), 60 to 95 (VTAD…CLKK), 119 to 154 (MKLD…TYKQ), and 161 to 196 (PTEA…GLKK). Asp-30, Asn-32, Asn-34, Thr-36, Glu-41, Asp-73, Asp-75, Asn-77, Glu-84, Asp-132, Asp-134, Ser-136, Gln-138, Glu-143, Asp-174, Asp-176, Asn-178, Thr-180, and Glu-185 together coordinate Ca(2+).

In terms of biological role, expected to play a crucial role in calcium-dependent regulation of ciliary movement. This is 23 kDa calcium-binding protein from Tetrahymena thermophila.